A 656-amino-acid polypeptide reads, in one-letter code: Threonine--tRNA ligase (656 aa).

The 66-residue stretch at 2-67 (LMSQITIILP…KDQTKVALVT (66 aa)) folds into the TGS domain. The tract at residues 251-542 (DHRKLGKELG…YLEHTAGHLP (292 aa)) is catalytic. 3 residues coordinate Zn(2+): C342, H393, and H519.

Belongs to the class-II aminoacyl-tRNA synthetase family. Homodimer. It depends on Zn(2+) as a cofactor.

The protein localises to the cytoplasm. It carries out the reaction tRNA(Thr) + L-threonine + ATP = L-threonyl-tRNA(Thr) + AMP + diphosphate + H(+). Catalyzes the attachment of threonine to tRNA(Thr) in a two-step reaction: L-threonine is first activated by ATP to form Thr-AMP and then transferred to the acceptor end of tRNA(Thr). Also edits incorrectly charged L-seryl-tRNA(Thr). This is Threonine--tRNA ligase from Bdellovibrio bacteriovorus (strain ATCC 15356 / DSM 50701 / NCIMB 9529 / HD100).